A 264-amino-acid chain; its full sequence is COP9 signalosome complex subunit 7b (264 aa).

Ala-2 is subject to N-acetylalanine. Residues 2-159 enclose the PCI domain; it reads AGEQKPSSNL…QLLEVDFCIG (158 aa). Residues 194 to 237 are a coiled coil; sequence RANQYKENHSRTQQQVEAEVTNIKKTLKATASSSAQEMEQQLAE. Positions 223-232 are enriched in polar residues; the sequence is TASSSAQEME. Residues 223 to 264 form a disordered region; sequence TASSSAQEMEQQLAERECPPHAEQRQPTKKMSKVKGLVSSRH. The segment covering 235 to 248 has biased composition (basic and acidic residues); it reads LAERECPPHAEQRQ.

It belongs to the CSN7/EIF3M family. CSN7 subfamily. As to quaternary structure, component of the CSN complex, composed of COPS1/GPS1, COPS2, COPS3, COPS4, COPS5, COPS6, COPS7 (COPS7A or COPS7B), COPS8 and COPS9. In the complex, it probably interacts directly with COPS1, COPS2, COPS4, COPS5, COPS6 and COPS8. Interacts with EIF3S6.

The protein resides in the cytoplasm. It localises to the nucleus. Its function is as follows. Component of the COP9 signalosome complex (CSN), a complex involved in various cellular and developmental processes. The CSN complex is an essential regulator of the ubiquitin (Ubl) conjugation pathway by mediating the deneddylation of the cullin subunits of SCF-type E3 ligase complexes, leading to decrease the Ubl ligase activity of SCF-type complexes such as SCF, CSA or DDB2. The complex is also involved in phosphorylation of p53/TP53, JUN, I-kappa-B-alpha/NFKBIA, ITPK1 and IRF8/ICSBP, possibly via its association with CK2 and PKD kinases. CSN-dependent phosphorylation of TP53 and JUN promotes and protects degradation by the Ubl system, respectively. The chain is COP9 signalosome complex subunit 7b (COPS7B) from Bos taurus (Bovine).